The sequence spans 130 residues: Small ribosomal subunit protein uS11c (130 aa).

Belongs to the universal ribosomal protein uS11 family. As to quaternary structure, part of the 30S ribosomal subunit.

It is found in the plastid. The protein resides in the chloroplast. This is Small ribosomal subunit protein uS11c from Psilotum nudum (Whisk fern).